The primary structure comprises 428 residues: Enolase (428 aa).

Gln-173 is a (2R)-2-phosphoglycerate binding site. The active-site Proton donor is Glu-217. Residues Asp-253, Glu-294, and Asp-320 each coordinate Mg(2+). Residues Lys-345, Arg-374, Ser-375, and Lys-396 each coordinate (2R)-2-phosphoglycerate. The active-site Proton acceptor is Lys-345.

It belongs to the enolase family. Requires Mg(2+) as cofactor.

Its subcellular location is the cytoplasm. It is found in the secreted. The protein resides in the cell surface. It carries out the reaction (2R)-2-phosphoglycerate = phosphoenolpyruvate + H2O. It functions in the pathway carbohydrate degradation; glycolysis; pyruvate from D-glyceraldehyde 3-phosphate: step 4/5. Functionally, catalyzes the reversible conversion of 2-phosphoglycerate (2-PG) into phosphoenolpyruvate (PEP). It is essential for the degradation of carbohydrates via glycolysis. This Methanosarcina barkeri (strain Fusaro / DSM 804) protein is Enolase.